The chain runs to 358 residues: Glutamine synthetase (358 aa).

The GS beta-grasp domain maps to 26–105 (ILAEYIWIDG…VLAECWNADG (80 aa)). Residues 112–358 (HRHECAKIME…IMMETICGGI (247 aa)) form the GS catalytic domain.

It belongs to the glutamine synthetase family. In terms of assembly, homooctamer.

The protein resides in the cytoplasm. The catalysed reaction is L-glutamate + NH4(+) + ATP = L-glutamine + ADP + phosphate + H(+). In Tuber borchii (White truffle), this protein is Glutamine synthetase (GLN1).